The primary structure comprises 337 residues: Ketol-acid reductoisomerase (NAD(P)(+)) (337 aa).

One can recognise a KARI N-terminal Rossmann domain in the interval 2-187 (ARMFYDADAN…GCTRAGVIET (186 aa)). Residues 25–28 (FGSQ), R48, and 88–91 (DEVQ) contribute to the NADP(+) site. The active site involves H113. Residue G139 participates in NADP(+) binding. The KARI C-terminal knotted domain occupies 188-333 (SFQEETETDL…AELRGMMPWL (146 aa)). Mg(2+) contacts are provided by D196, E200, E232, and E236. S257 lines the substrate pocket.

Belongs to the ketol-acid reductoisomerase family. Requires Mg(2+) as cofactor.

It carries out the reaction (2R)-2,3-dihydroxy-3-methylbutanoate + NAD(+) = (2S)-2-acetolactate + NADH + H(+). It catalyses the reaction (2R)-2,3-dihydroxy-3-methylbutanoate + NADP(+) = (2S)-2-acetolactate + NADPH + H(+). It participates in amino-acid biosynthesis; L-isoleucine biosynthesis; L-isoleucine from 2-oxobutanoate: step 2/4. Its pathway is amino-acid biosynthesis; L-valine biosynthesis; L-valine from pyruvate: step 2/4. Its function is as follows. Involved in the biosynthesis of branched-chain amino acids (BCAA). Catalyzes an alkyl-migration followed by a ketol-acid reduction of (S)-2-acetolactate (S2AL) to yield (R)-2,3-dihydroxy-isovalerate. In the isomerase reaction, S2AL is rearranged via a Mg-dependent methyl migration to produce 3-hydroxy-3-methyl-2-ketobutyrate (HMKB). In the reductase reaction, this 2-ketoacid undergoes a metal-dependent reduction by NADPH or NADH to yield (R)-2,3-dihydroxy-isovalerate. This Syntrophomonas wolfei subsp. wolfei (strain DSM 2245B / Goettingen) protein is Ketol-acid reductoisomerase (NAD(P)(+)).